The primary structure comprises 464 residues: Soluble pyridine nucleotide transhydrogenase (464 aa).

An FAD-binding site is contributed by 35 to 44; that stretch reads DSRRQVGGNC.

It belongs to the class-I pyridine nucleotide-disulfide oxidoreductase family. FAD is required as a cofactor.

Its subcellular location is the cytoplasm. The catalysed reaction is NAD(+) + NADPH = NADH + NADP(+). Conversion of NADPH, generated by peripheral catabolic pathways, to NADH, which can enter the respiratory chain for energy generation. This chain is Soluble pyridine nucleotide transhydrogenase, found in Pseudomonas entomophila (strain L48).